The sequence spans 343 residues: Peptide methionine sulfoxide reductase msrA/msrB (343 aa).

The tract at residues Lys21–Lys174 is peptide methionine sulfoxide reductase A. Residue Cys29 is the Cysteine sulfenic acid (-SOH) intermediate of the active site. In terms of domain architecture, MsrB spans Asp191–Leu314. Cys303 acts as the Nucleophile in catalysis.

In the N-terminal section; belongs to the MsrA Met sulfoxide reductase family. This sequence in the C-terminal section; belongs to the MsrB Met sulfoxide reductase family.

It catalyses the reaction L-methionyl-[protein] + [thioredoxin]-disulfide + H2O = L-methionyl-(S)-S-oxide-[protein] + [thioredoxin]-dithiol. The catalysed reaction is [thioredoxin]-disulfide + L-methionine + H2O = L-methionine (S)-S-oxide + [thioredoxin]-dithiol. The enzyme catalyses L-methionyl-[protein] + [thioredoxin]-disulfide + H2O = L-methionyl-(R)-S-oxide-[protein] + [thioredoxin]-dithiol. Has an important function as a repair enzyme for proteins that have been inactivated by oxidation. Catalyzes the reversible oxidation-reduction of methionine sulfoxide in proteins to methionine. The protein is Peptide methionine sulfoxide reductase msrA/msrB of Enterococcus faecalis (Streptococcus faecalis).